Consider the following 145-residue polypeptide: Mini-ribonuclease 3 (145 aa).

Aspartate 27 is a catalytic residue.

The protein belongs to the MrnC RNase family. In terms of assembly, homodimer. Mg(2+) is required as a cofactor.

It is found in the cytoplasm. Functionally, involved in correct processing of both the 5' and 3' ends of 23S rRNA precursor. Processes 30S rRNA precursor transcript even in absence of ribonuclease 3 (Rnc); Rnc processes 30S rRNA into smaller rRNA precursors. In Kosmotoga olearia (strain ATCC BAA-1733 / DSM 21960 / TBF 19.5.1), this protein is Mini-ribonuclease 3.